Consider the following 68-residue polypeptide: ATP synthase F(0) complex subunit 8 (68 aa).

Residues 8-24 (TWFTIIMAMLPTLYLIT) form a helical membrane-spanning segment. Residue lysine 54 is modified to N6-acetyllysine; alternate. Lysine 54 bears the N6-succinyllysine; alternate mark. Lysine 57 carries the N6-acetyllysine modification.

Belongs to the ATPase protein 8 family. As to quaternary structure, component of the ATP synthase complex composed at least of ATP5F1A/subunit alpha, ATP5F1B/subunit beta, ATP5MC1/subunit c (homooctomer), MT-ATP6/subunit a, MT-ATP8/subunit 8, ATP5ME/subunit e, ATP5MF/subunit f, ATP5MG/subunit g, ATP5MK/subunit k, ATP5MJ/subunit j, ATP5F1C/subunit gamma, ATP5F1D/subunit delta, ATP5F1E/subunit epsilon, ATP5PF/subunit F6, ATP5PB/subunit b, ATP5PD/subunit d, ATP5PO/subunit OSCP. ATP synthase complex consists of a soluble F(1) head domain (subunits alpha(3) and beta(3)) - the catalytic core - and a membrane F(0) domain - the membrane proton channel (subunits c, a, 8, e, f, g, k and j). These two domains are linked by a central stalk (subunits gamma, delta, and epsilon) rotating inside the F1 region and a stationary peripheral stalk (subunits F6, b, d, and OSCP). Interacts with PRICKLE3.

The protein localises to the mitochondrion membrane. Its function is as follows. Subunit 8, of the mitochondrial membrane ATP synthase complex (F(1)F(0) ATP synthase or Complex V) that produces ATP from ADP in the presence of a proton gradient across the membrane which is generated by electron transport complexes of the respiratory chain. ATP synthase complex consist of a soluble F(1) head domain - the catalytic core - and a membrane F(1) domain - the membrane proton channel. These two domains are linked by a central stalk rotating inside the F(1) region and a stationary peripheral stalk. During catalysis, ATP synthesis in the catalytic domain of F(1) is coupled via a rotary mechanism of the central stalk subunits to proton translocation. In vivo, can only synthesize ATP although its ATP hydrolase activity can be activated artificially in vitro. Part of the complex F(0) domain. The polypeptide is ATP synthase F(0) complex subunit 8 (Papio hamadryas (Hamadryas baboon)).